The chain runs to 434 residues: Sensor histidine kinase Hik2 (434 aa).

One can recognise a GAF domain in the interval I16 to A152. C19 serves as a coordination point for [3Fe-4S] cluster. The Histidine kinase domain maps to D182–E432. H185 bears the Phosphohistidine; by autocatalysis mark. The short motif at D357–G361 is the G1 box element. A G2 box motif is present at residues G386–G390.

Belongs to the chloroplast sensor kinase protein family. As to quaternary structure, exists as monomers, tetramers, hexamers and other higher-order oligomers; all are able to autophosphorylate. Upon treatment with 0.5 M NaCl only tetramers are seen, which are probably inactive. Interacts with both RppA and Rre1. The cofactor is [3Fe-4S] cluster. Autophosphorylates, probably on His-185.

The protein resides in the cytoplasm. It catalyses the reaction ATP + protein L-histidine = ADP + protein N-phospho-L-histidine.. With respect to regulation, autophosphorylation is inhibited by Na(+) but not by Cl(-). Reducing agents dithionite, duroquinol and decyl-plastoquinone, but not NADPH or ferredoxin inhibit autophosphorylation. Oxidation of the Fe-S cluster (with potassium ferricyanide) induces a conformational change that is conducive to its autophosphorylation activity. Its function is as follows. Member of possibly 2 two-component regulatory system(s) Hik2/Rre1 and Hik2/RppA. Transduces PQ (plastoquinone) redox signals to photosystem gene expression machinery during the adjustment of photosystem stoichiometry. Reduced PQ suppresses its autophosphorylation activity (i.e. kinase activity is higher under oxidizing conditions). Member of two-component regulatory system Hik2/Rre1, controls expression of sigB (sll0306), sll0528, slr1119, slr0852 and ssr3188 in response to hyperosmotic stress. Activity responds to high salt (with a linear response as concentrations rise to 0.5 M NaCl); detects Cl(-) levels. Autophosphorylates and transfers phosphate to Rre1. May transfer phosphate to RppA in a possible Hik2/RppA two-component system. The chain is Sensor histidine kinase Hik2 from Synechocystis sp. (strain ATCC 27184 / PCC 6803 / Kazusa).